A 1890-amino-acid chain; its full sequence is Proteasome-associated protein ECM29 homolog (1890 aa).

HEAT repeat units follow at residues Asn6–Glu29, Ala30–Ser67, Asp130–Asn167, Phe226–Phe263, Arg294–Asn330, Lys334–Ser354, Lys355–Gln395, Gly459–Ala496, Ala498–Thr523, Ser524–Arg561, Pro565–Val602, Ala685–Ser722, Pro776–Ile813, Ser843–Glu882, Asp938–Gln975, Leu980–Ser1018, Pro1118–Glu1155, and Arg1159–Gly1196. Ser1213 carries the post-translational modification Phosphoserine. 8 HEAT repeats span residues Ala1271–Ser1309, Pro1313–Ala1350, Ser1378–Gly1415, Lys1416–Glu1457, Asp1497–Pro1534, Leu1541–Ser1578, Pro1583–Arg1620, and Gln1623–Ala1660. A disordered region spans residues Arg1680 to Lys1702. Ser1683 carries the phosphoserine modification. At Thr1691 the chain carries Phosphothreonine. Residue Ser1692 is modified to Phosphoserine. 2 HEAT repeats span residues Pro1751 to Ile1788 and Lys1826 to Lys1863.

Associated with the proteasome.

The protein localises to the cytoplasm. The polypeptide is Proteasome-associated protein ECM29 homolog (Drosophila melanogaster (Fruit fly)).